A 274-amino-acid chain; its full sequence is Type II restriction enzyme HgiEI (274 aa).

Belongs to the TdeIII type II restriction endonuclease family.

It carries out the reaction Endonucleolytic cleavage of DNA to give specific double-stranded fragments with terminal 5'-phosphates.. Its function is as follows. A P subtype restriction enzyme that recognizes the double-stranded sequence 5'-GGWCC-3' and cleaves after G-1. This system is more active than isoschizomeric RM.HgiBI. The sequence is that of Type II restriction enzyme HgiEI from Herpetosiphon aurantiacus (Herpetosiphon giganteus).